The sequence spans 424 residues: FeMo cofactor biosynthesis protein NifB (424 aa).

The Radical SAM core domain maps to 12-261; that stretch reads NDSSRHTYGR…PQMKHCARCR (250 aa). Residues cysteine 30, cysteine 34, and cysteine 37 each contribute to the [4Fe-4S] cluster site. The S-adenosyl-L-methionine site is built by glycine 84, threonine 136, and valine 188. Residues cysteine 257 and cysteine 260 each coordinate [4Fe-4S] cluster.

This sequence belongs to the radical SAM superfamily. NifB family. As to quaternary structure, monomer. [4Fe-4S] cluster is required as a cofactor.

It functions in the pathway cofactor biosynthesis; Fe-Mo cofactor biosynthesis. Involved in the biosynthesis of the iron-molybdenum cofactor (FeMo-co or M-cluster) found in the dinitrogenase enzyme of the nitrogenase complex in nitrogen-fixing microorganisms. NifB catalyzes the crucial step of radical SAM-dependent carbide insertion that occurs concomitant with the insertion of a 9th sulfur and the rearrangement/coupling of two [4Fe-4S] clusters into a [8Fe-9S-C] cluster, the precursor to the M-cluster. This Chlorobaculum tepidum (strain ATCC 49652 / DSM 12025 / NBRC 103806 / TLS) (Chlorobium tepidum) protein is FeMo cofactor biosynthesis protein NifB.